The sequence spans 7158 residues: Twitchin (7158 aa).

Ig-like domains lie at 5-97 (PRFT…INLN) and 111-204 (PSFV…LALN). 2 disulfides stabilise this stretch: cysteine 25-cysteine 81 and cysteine 132-cysteine 188. Disordered stretches follow at residues 204 to 381 (NFEE…PIVL), 473 to 639 (EEEL…TKLR), 658 to 732 (KKVK…DSMA), and 763 to 955 (EVKE…IDMR). Low complexity predominate over residues 220–238 (TASPRPSSRGPGSRPSSPK). Basic and acidic residues-rich tracts occupy residues 242–259 (KSRE…EGSP) and 279–291 (ESRR…KMEV). Low complexity-rich tracts occupy residues 319–340 (SPST…RKGS) and 347–368 (SGTT…ASSD). An Ig-like 3 domain is found at 377–466 (PPIVLEASRS…GEGQSSAMVK (90 aa)). The segment covering 504–513 (RVARRSKSKS) has biased composition (basic residues). Over residues 514 to 523 (KSPAPQAKKS) the composition is skewed to low complexity. Basic and acidic residues-rich tracts occupy residues 529–540 (GRQEASEVEHKR) and 601–618 (KTDS…DTLL). Over residues 620–630 (KTTTSTKNESS) the composition is skewed to low complexity. One copy of the Kelch 1 repeat lies at 718–764 (VKSGAGGLEKSDSMASLKKLDLKKGKIDDNSDGAFKVQLKKVVKKEV). 4 stretches are compositionally biased toward basic and acidic residues: residues 763–813 (EVKE…DKPK), 837–850 (KEVE…ELKA), 885–897 (KAHD…EGIK), and 917–955 (SESR…IDMR). Positions 980–1072 (PKIVEVPENV…DSADVKLLVT (93 aa)) constitute an Ig-like 4 domain. Residues 1088–1118 (SQAGFQKDGEGGGAGGGGGEKKPMTEAERRQ) form a disordered region. Residues 1106 to 1118 (GEKKPMTEAERRQ) are compositionally biased toward basic and acidic residues. Ig-like domains lie at 1122-1213 (PGKK…AQLT), 1217-1306 (PPMK…SKVQ), and 1312-1398 (PRHT…AQLI). Cysteine 1150 and cysteine 1201 form a disulfide bridge. Fibronectin type-III domains lie at 1598–1690 (PKGP…AKNP), 1696–1791 (KPKN…MKAK), 1891–1988 (PPKG…IKDP), 1994–2087 (KPGR…AKPK), 2189–2282 (PNGP…AKNP), 2288–2383 (KTGT…AKPR), 2483–2576 (PLGP…AKNP), and 2579–2675 (VPGK…AKPR). One copy of the Kelch 2 repeat lies at 2014 to 2058 (PPHKDGGAPIEEYIVEVRDPDTKEWKEVKRVPDTNASISGLKEGK). The Ig-like 8 domain maps to 2086–2181 (PKFIPAWLKH…GADEEKANLT (96 aa)). Residues 2207–2253 (WKPPDDDGGEPIEYYEVEKLDTATGRWVPCAKVKDTKAHIDGLKKGQ) form a Kelch 3 repeat. Over residues 2266–2287 (GASDALSTDKDTKAKNPYDEPG) the composition is skewed to basic and acidic residues. The tract at residues 2266-2295 (GASDALSTDKDTKAKNPYDEPGKTGTPDVV) is disordered. Residues 2502–2547 (KVPEDDGGAPIDHYEIEKMDLATGRWVPCGRSETTKTTVPNLQPGH) form a Kelch 4 repeat. Residues 2679–2763 (PRIHREDLSD…TNINGTDSVT (85 aa)) form the Ig-like 9 domain. Fibronectin type-III domains lie at 2775–2868 (PKGP…AKNP) and 2874–2968 (RPGR…AKPR). The stretch at 2793–2839 (WKPPEDDGGEPIEFYEIEKMNTKDGIWVPCGRSGDTHFTVDSLNKGD) is one Kelch 5 repeat. The interval 2849–2901 (NSEGPSDPLETETDILAKNPFDRPDRPGRPEPTDWDSDHVDLKWDPPLSDGGA) is disordered. Positions 2868 to 2892 (PFDRPDRPGRPEPTDWDSDHVDLKW) are enriched in basic and acidic residues. Positions 2972–3062 (PHIDRDALKN…GEDEATVKIN (91 aa)) constitute an Ig-like 10 domain. 2 consecutive Fibronectin type-III domains span residues 3070–3165 (PNGP…AKDP) and 3171–3265 (KTNA…AKAR). The Kelch 6 repeat unit spans residues 3089–3134 (RAPDDDGGIPIENYVIEKYDTASGRWVPAAKVAGDKTTAVVDGLIP). The region spanning 3268–3358 (PPVIDRNSIQ…GTDTAEVKVT (91 aa)) is the Ig-like 11 domain. Fibronectin type-III domains follow at residues 3365 to 3459 (SPRG…AKDP) and 3465 to 3559 (KPGT…AKPR). The stretch at 3384-3430 (WKEPEDDGGAEISHYVIEKQDAATGRWTACGESKDTNFHVDDLTQGH) is one Kelch 7 repeat. The 91-residue stretch at 3563 to 3653 (PKINRDMFVA…GKDEHEVDVN (91 aa)) folds into the Ig-like 12 domain. Fibronectin type-III domains lie at 3661–3753 (PEGP…AKNP), 3759–3853 (APTD…AKPR), 3954–4047 (PEGP…AKNQ), 4053–4146 (PVDK…TKAR), 4246–4340 (PEGP…AKDP), and 4346–4440 (KPGR…TAKP). A Kelch 8 repeat occupies 3972–4018 (WKPPTDNGGTDVLHYIVEKMDTSRGTWQEVGTFPDCTAKVNKLVPGK). 2 Kelch repeats span residues 4265-4310 (KPPK…LTEG) and 4365-4410 (DPPR…RVQK). Residues 4445-4531 (PKFDLDLDGK…GEAEANIKIT (87 aa)) enclose the Ig-like 13 domain. 8 Fibronectin type-III domains span residues 4538-4631 (APEN…IKDP), 4637-4733 (APST…CRPY), 4739-4834 (APDA…IEEQ), 4936-5028 (PTGP…AKNP), 5034-5129 (APGQ…ADNA), 5231-5326 (SPQH…VAKY), 5333-5427 (QPEA…LKSR), and 5430-5528 (PPGP…IQES). The stretch at 4557-4602 (DAPKDDGGAEIAGYKIEYQEVGSQIWDKVPGLISGTAYTVRGLEHG) is one Kelch 11 repeat. Residues 5287-5335 (LNYTVGGLIKDNRYRFRVRAETQYGVSEPCELADVVVAKYQFEVPNQPE) form a Kelch 12 repeat. The Ig-like 14 domain maps to 5533–5621 (PQIVVKPEDT…GSDTATANLV (89 aa)). Fibronectin type-III domains follow at residues 5723–5817 (PQGP…ARLP) and 5823–5919 (SPLN…ASGS). Residues 5742-5787 (RPPVTDGGSKITSYVVEKRDLSKDEWVTVTSNVKDMNYIVTGLFEN) form a Kelch 13 repeat. Ig-like domains are found at residues 5923–6011 (PKIV…ANLR) and 6016–6107 (PRVF…VNVT). A disulfide bridge connects residues cysteine 5944 and cysteine 5995. The 94-residue stretch at 6114–6207 (PPRFPIIENI…PTAPVLIPGD (94 aa)) folds into the Fibronectin type-III 31 domain. The Protein kinase domain maps to 6261 to 6516 (YDIHEELGTG…IHQALEHPWL (256 aa)). ATP is bound by residues 6267 to 6275 (LGTGAFGVV) and lysine 6290. Aspartate 6382 functions as the Proton acceptor in the catalytic mechanism. The tract at residues 6517–6581 (TPGNAPGRDS…SIRDAFWDRS (65 aa)) is C-terminal regulatory domain (CDR). Ig-like domains are found at residues 6585 to 6673 (PRFI…VFLN), 6696 to 6795 (PRVE…CVLT), 6863 to 6952 (PSFT…ATLT), 6958 to 7059 (PLLN…ASLV), and 7067 to 7149 (PPVT…KAIA).

This sequence belongs to the protein kinase superfamily. CAMK Ser/Thr protein kinase family. In terms of assembly, may interact (via protein kinase and CRD domains) with mak-1 (via protein kinase domain). Mg(2+) serves as cofactor. Post-translationally, phosphorylated by mak-1 on the protein kinase domain and/or CDR domain in vitro. As to expression, expressed in body wall, anal, vulval, and pharyngeal muscles (at protein level).

Its subcellular location is the cytoplasm. The protein localises to the myofibril. It is found in the sarcomere. It localises to the a band. It catalyses the reaction L-seryl-[protein] + ATP = O-phospho-L-seryl-[protein] + ADP + H(+). It carries out the reaction L-threonyl-[protein] + ATP = O-phospho-L-threonyl-[protein] + ADP + H(+). Its activity is regulated as follows. Forces generated by the contraction/relaxation cycles of muscle activity separate the regulatory domain from the catalytic core, activating the enzyme. At rest, the kinase domain is in a closed conformation. The active site is occupied by the autoinhibitory region (CDR), which makes extensive contact with the catalytic site, blocking substrate binding. At low forces the regulatory tail will unravel reversibly and expose the active site to its substrates, potentially stabilized by binding of Ca/CALM. At high forces the kinase begins to unfold and the integrity of the active site is disrupted. Regulator of muscle contraction and relaxation. Senses mechanical strain that occurs during muscle activity by unfolding in clearly resolvable steps at differing forces. Plays a role in the organization of sarcomeres in body wall muscles. This is Twitchin from Caenorhabditis elegans.